The primary structure comprises 158 residues: Transcription antitermination protein NusB (158 aa).

The protein belongs to the NusB family.

Its function is as follows. Involved in transcription antitermination. Required for transcription of ribosomal RNA (rRNA) genes. Binds specifically to the boxA antiterminator sequence of the ribosomal RNA (rrn) operons. The sequence is that of Transcription antitermination protein NusB from Bartonella henselae (strain ATCC 49882 / DSM 28221 / CCUG 30454 / Houston 1) (Rochalimaea henselae).